Here is a 469-residue protein sequence, read N- to C-terminus: Adenosylhomocysteinase (469 aa).

Substrate-binding residues include Thr-58, Asp-133, and Glu-195. 196–198 (TTT) provides a ligand contact to NAD(+). The substrate site is built by Lys-225 and Asp-229. Residues Asn-230, 259–264 (GFGDVG), Glu-282, Asn-317, 338–340 (IGH), and Asn-383 contribute to the NAD(+) site.

It belongs to the adenosylhomocysteinase family. Requires NAD(+) as cofactor.

It localises to the cytoplasm. The enzyme catalyses S-adenosyl-L-homocysteine + H2O = L-homocysteine + adenosine. The protein operates within amino-acid biosynthesis; L-homocysteine biosynthesis; L-homocysteine from S-adenosyl-L-homocysteine: step 1/1. In terms of biological role, may play a key role in the regulation of the intracellular concentration of adenosylhomocysteine. The chain is Adenosylhomocysteinase from Rhodopseudomonas palustris (strain ATCC BAA-98 / CGA009).